We begin with the raw amino-acid sequence, 770 residues long: MENVQSRMQGSRIPGLKEMNPSGTNARSRLPQPGAIANKPTAVPQLARTRSTTESTRIGAGPPSAARSVNGATKAHTRANSYANSSTLTRSASAASRPRGPLSSSTSGRPKTSMSTSRRPNGHALPRPATSLDTHQEERSYGGLGKRGEWDQDEREQNLESLFETFVSRISQQGQESSGLKDALEVYKSRVGELEEAKSEQTEQNIRLKVELDVSKSRLAEAEDALKNAQRDHEIAIDELMSRQRAECESVRYESQKSLDALKAQHESELKELRRQFERELEDEKCARVRELNQLHSKTALDAQLSQIELDKTIKELAATREDLQSLRTELDRERKNTNNLRQNLDTAASNSVTLESTISALKARIEFLESGREEQSEAFERLNQQMMDAMAETNAAKEKLRREETLRRKLHNQVQELKGNIRVFCRVRPTLENEGASDAAQFTYPDEGEDSKEINIIGPEEKSSFGTVTRKNHNFSFDHVFGPSAQNSDVFDEISQLVQSALDGYNVCIFCYGQTGSGKTHTMSSLDGMIPRAVHQIYETATSLEEKGWRYTMEGNFVEVYNENLNDLLGKAEELDKKKLEIRHDMQRGKTTITDATTVQLESPEMVESLLKRAAANRSVAATKANERSSRSHSIFILKLIGENYITGERSEGTLNLVDLAGSERLSHSGATGDRLKETQNINRSLSCLGDVIAALGQGKKDGHIPYRNSKLTYLLQFSLGGNSKTLMFVMVSPLQAHLSETLTSLKFATKVHNTHIGTAKKQTRVRDV.

Positions 1 to 152 (MENVQSRMQG…GLGKRGEWDQ (152 aa)) are disordered. Residues 85–105 (SSTLTRSASAASRPRGPLSSS) are compositionally biased toward low complexity. The span at 106–119 (TSGRPKTSMSTSRR) shows a compositional bias: polar residues. The segment covering 134–152 (THQEERSYGGLGKRGEWDQ) has biased composition (basic and acidic residues). A coiled-coil region spans residues 175-425 (QESSGLKDAL…QELKGNIRVF (251 aa)). Residues 421–756 (NIRVFCRVRP…LKFATKVHNT (336 aa)) enclose the Kinesin motor domain. 514-521 (GQTGSGKT) provides a ligand contact to ATP.

The protein belongs to the TRAFAC class myosin-kinesin ATPase superfamily. Kinesin family. NCD subfamily.

The protein localises to the cytoplasm. It is found in the cytoskeleton. This Emericella nidulans (strain FGSC A4 / ATCC 38163 / CBS 112.46 / NRRL 194 / M139) (Aspergillus nidulans) protein is Kinesin-like protein klpA (klpA).